The following is a 912-amino-acid chain: Bifunctional uridylyltransferase/uridylyl-removing enzyme (912 aa).

Residues 1–369 are uridylyltransferase; sequence MLPRIANQRA…FFASLRSRRK (369 aa). The interval 370-722 is uridylyl-removing; that stretch reads KVGPFFIEGG…AHWYPARGAT (353 aa). One can recognise an HD domain in the interval 486–608; that stretch reads VDEHTIRAIG…VQSQERLRLL (123 aa). ACT domains lie at 723 to 802 and 834 to 912; these read LVTV…LVPQ and VIEV…KDAA.

The protein belongs to the GlnD family. Requires Mg(2+) as cofactor.

It catalyses the reaction [protein-PII]-L-tyrosine + UTP = [protein-PII]-uridylyl-L-tyrosine + diphosphate. The enzyme catalyses [protein-PII]-uridylyl-L-tyrosine + H2O = [protein-PII]-L-tyrosine + UMP + H(+). Uridylyltransferase (UTase) activity is inhibited by glutamine, while glutamine activates uridylyl-removing (UR) activity. Modifies, by uridylylation and deuridylylation, the PII regulatory proteins (GlnB and homologs), in response to the nitrogen status of the cell that GlnD senses through the glutamine level. Under low glutamine levels, catalyzes the conversion of the PII proteins and UTP to PII-UMP and PPi, while under higher glutamine levels, GlnD hydrolyzes PII-UMP to PII and UMP (deuridylylation). Thus, controls uridylylation state and activity of the PII proteins, and plays an important role in the regulation of nitrogen assimilation and metabolism. This Novosphingobium aromaticivorans (strain ATCC 700278 / DSM 12444 / CCUG 56034 / CIP 105152 / NBRC 16084 / F199) protein is Bifunctional uridylyltransferase/uridylyl-removing enzyme.